Consider the following 181-residue polypeptide: Large ribosomal subunit protein uL5 (181 aa).

The protein belongs to the universal ribosomal protein uL5 family. In terms of assembly, part of the 50S ribosomal subunit; contacts the 5S rRNA and probably tRNA. Forms a bridge to the 30S subunit in the 70S ribosome.

Functionally, this is one of the proteins that bind and probably mediate the attachment of the 5S RNA into the large ribosomal subunit, where it forms part of the central protuberance. In the 70S ribosome it contacts protein S13 of the 30S subunit (bridge B1b), connecting the 2 subunits; this bridge is implicated in subunit movement. May contact the P site tRNA; the 5S rRNA and some of its associated proteins might help stabilize positioning of ribosome-bound tRNAs. This Methanococcus maripaludis (strain C6 / ATCC BAA-1332) protein is Large ribosomal subunit protein uL5.